The primary structure comprises 604 residues: Inositol-3-phosphate synthase 1 (604 aa).

Positions 88, 89, 90, 91, 163, 198, 199, 210, 213, 251, 252, 253, 254, 303, 327, 328, 330, 361, 362, 363, 376, 456, 457, 485, and 486 each coordinate NAD(+).

Belongs to the myo-inositol 1-phosphate synthase family. NAD(+) serves as cofactor.

The catalysed reaction is D-glucose 6-phosphate = 1D-myo-inositol 3-phosphate. The protein operates within polyol metabolism; myo-inositol biosynthesis; myo-inositol from D-glucose 6-phosphate: step 1/2. Its function is as follows. Key enzyme in myo-inositol biosynthesis pathway that catalyzes the conversion of glucose 6-phosphate to 1-myo-inositol 1-phosphate in a NAD-dependent manner. Rate-limiting enzyme in the synthesis of all inositol-containing compounds. De novo-synthesized myo-inositol is essential for incorporation into GPI (glycosylphosphatidylinositol) glycolipids during intra-erythrocytic development. The polypeptide is Inositol-3-phosphate synthase 1 (Plasmodium falciparum (isolate 3D7)).